The chain runs to 303 residues: Elongation factor Ts (303 aa).

The involved in Mg(2+) ion dislocation from EF-Tu stretch occupies residues T81–V84.

Belongs to the EF-Ts family.

It is found in the cytoplasm. Associates with the EF-Tu.GDP complex and induces the exchange of GDP to GTP. It remains bound to the aminoacyl-tRNA.EF-Tu.GTP complex up to the GTP hydrolysis stage on the ribosome. In Mesomycoplasma hyopneumoniae (strain 7448) (Mycoplasma hyopneumoniae), this protein is Elongation factor Ts.